Consider the following 225-residue polypeptide: Cytidylate kinase (225 aa).

Position 10-18 (10-18 (GPASSGKST)) interacts with ATP.

Belongs to the cytidylate kinase family. Type 1 subfamily.

Its subcellular location is the cytoplasm. It carries out the reaction CMP + ATP = CDP + ADP. The enzyme catalyses dCMP + ATP = dCDP + ADP. This chain is Cytidylate kinase, found in Streptococcus gordonii (strain Challis / ATCC 35105 / BCRC 15272 / CH1 / DL1 / V288).